A 124-amino-acid polypeptide reads, in one-letter code: Small ribosomal subunit protein uS11 (124 aa).

The protein belongs to the universal ribosomal protein uS11 family. As to quaternary structure, part of the 30S ribosomal subunit. Interacts with proteins S7 and S18. Binds to IF-3.

Functionally, located on the platform of the 30S subunit, it bridges several disparate RNA helices of the 16S rRNA. Forms part of the Shine-Dalgarno cleft in the 70S ribosome. This is Small ribosomal subunit protein uS11 from Anaplasma marginale (strain St. Maries).